Here is a 121-residue protein sequence, read N- to C-terminus: uncharacterized protein (121 aa).

This is an uncharacterized protein from Ictaluridae (bullhead catfishes).